The sequence spans 149 residues: Calmodulin (149 aa).

Ala-2 carries the post-translational modification N-acetylalanine. 4 consecutive EF-hand domains span residues 8 to 43, 44 to 79, 81 to 116, and 117 to 149; these read EQIA…LGQN, PTEA…KMKD, DSEE…LGEK, and LTDE…MMSK. Positions 21, 23, 25, 27, 32, 57, 59, 61, 63, 68, 94, 96, 98, and 105 each coordinate Ca(2+). Lys-116 is modified (N6,N6,N6-trimethyllysine). Ca(2+) contacts are provided by Asp-130, Asp-132, Asp-134, Gln-136, and Glu-141.

This sequence belongs to the calmodulin family.

Functionally, calmodulin mediates the control of a large number of enzymes, ion channels and other proteins by Ca(2+). Among the enzymes to be stimulated by the calmodulin-Ca(2+) complex are a number of protein kinases and phosphatases. The polypeptide is Calmodulin (cam) (Saccharina japonica (Sweet kelp)).